The chain runs to 254 residues: 5-oxoprolinase subunit A (254 aa).

The protein belongs to the LamB/PxpA family. As to quaternary structure, forms a complex composed of PxpA, PxpB and PxpC.

The enzyme catalyses 5-oxo-L-proline + ATP + 2 H2O = L-glutamate + ADP + phosphate + H(+). Catalyzes the cleavage of 5-oxoproline to form L-glutamate coupled to the hydrolysis of ATP to ADP and inorganic phosphate. The protein is 5-oxoprolinase subunit A of Burkholderia ambifaria (strain MC40-6).